Reading from the N-terminus, the 280-residue chain is uncharacterized protein (280 aa).

It belongs to the herpesviridae BDLF2 family.

This is an uncharacterized protein from Saimiri sciureus (Common squirrel monkey).